Reading from the N-terminus, the 201-residue chain is Heat shock protein beta-1 (201 aa).

Arg-12 is subject to Omega-N-methylarginine. At Ser-15 the chain carries Phosphoserine; by MAPKAPK2 and MAPKAPK3. Position 27 is a phosphoserine (Ser-27). The segment at Ala-68–Lys-201 is interaction with TGFB1I1. Residues Ala-72 to Thr-180 form the sHSP domain. Residues Ser-74 and Ser-78 each carry the phosphoserine; by MAPKAPK2, MAPKAPK3 and MAPKAPK5 modification. Phosphoserine is present on residues Ser-79, Ser-82, and Ser-94. Lys-119 carries the N6-acetyllysine modification. Residue Thr-170 is modified to Phosphothreonine. 2 positions are modified to phosphoserine: Ser-172 and Ser-195.

This sequence belongs to the small heat shock protein (HSP20) family. Homooligomer. Homodimer; becomes monomeric upon activation. Heterooligomer; with HSPB6. Associates with alpha- and beta-tubulin. Interacts with TGFB1I1. Interacts with CRYAB. Interacts with HSPB8. Interacts with HSPBAP1. In terms of processing, phosphorylated upon exposure to protein kinase C activators and heat shock. Phosphorylation by MAPKAPK2 and MAPKAPK3 in response to stress dissociates HSPB1 from large small heat-shock protein (sHsps) oligomers and impairs its chaperone activity and ability to protect against oxidative stress effectively. Phosphorylation by MAPKAPK5 in response to PKA stimulation induces F-actin rearrangement.

The protein localises to the cytoplasm. It localises to the nucleus. Its subcellular location is the cytoskeleton. It is found in the spindle. In terms of biological role, small heat shock protein which functions as a molecular chaperone probably maintaining denatured proteins in a folding-competent state. Plays a role in stress resistance and actin organization. Through its molecular chaperone activity may regulate numerous biological processes including the phosphorylation and the axonal transport of neurofilament proteins. The protein is Heat shock protein beta-1 (HSPB1) of Bos taurus (Bovine).